A 274-amino-acid chain; its full sequence is Acetyl-coenzyme A carboxylase carboxyl transferase subunit alpha (274 aa).

The region spanning 2-250 (NKEFIKSIVV…KKELMNAMNE (249 aa)) is the CoA carboxyltransferase C-terminal domain.

This sequence belongs to the AccA family. As to quaternary structure, acetyl-CoA carboxylase is a heterohexamer composed of biotin carboxyl carrier protein (AccB), biotin carboxylase (AccC) and two subunits each of ACCase subunit alpha (AccA) and ACCase subunit beta (AccD).

The protein localises to the cytoplasm. The catalysed reaction is N(6)-carboxybiotinyl-L-lysyl-[protein] + acetyl-CoA = N(6)-biotinyl-L-lysyl-[protein] + malonyl-CoA. It functions in the pathway lipid metabolism; malonyl-CoA biosynthesis; malonyl-CoA from acetyl-CoA: step 1/1. In terms of biological role, component of the acetyl coenzyme A carboxylase (ACC) complex. First, biotin carboxylase catalyzes the carboxylation of biotin on its carrier protein (BCCP) and then the CO(2) group is transferred by the carboxyltransferase to acetyl-CoA to form malonyl-CoA. In Clostridium botulinum (strain Eklund 17B / Type B), this protein is Acetyl-coenzyme A carboxylase carboxyl transferase subunit alpha.